The sequence spans 331 residues: Hyaluronidase (331 aa).

Disulfide bonds link C19/C308 and C185/C197. N79 carries an N-linked (GlcNAc...) asparagine glycan. The active-site Proton donor is E109. A glycan (N-linked (GlcNAc...) asparagine) is linked at N325.

It belongs to the glycosyl hydrolase 56 family. Expressed by the venom gland.

Its subcellular location is the secreted. The enzyme catalyses Random hydrolysis of (1-&gt;4)-linkages between N-acetyl-beta-D-glucosamine and D-glucuronate residues in hyaluronate.. Its function is as follows. Hydrolyzes high molecular weight hyaluronic acid to produce small oligosaccharides. The polypeptide is Hyaluronidase (Dolichovespula maculata (Bald-faced hornet)).